The chain runs to 60 residues: Small ribosomal subunit protein uS10 (60 aa).

Belongs to the universal ribosomal protein uS10 family.

This chain is Small ribosomal subunit protein uS10 (RPS20), found in Zea mays (Maize).